A 430-amino-acid polypeptide reads, in one-letter code: Chromatin assembly factor 1 p55 subunit (430 aa).

Residues Ser11 and Ser100 each carry the phosphoserine modification. WD repeat units follow at residues 126-159 (NHEG…FDYT), 179-210 (GHQK…CLWD), 229-260 (GHTA…MIWD), 275-306 (AHTA…ALWD), 319-350 (SHKD…HVWD), and 376-407 (GHTA…QVWQ).

The protein belongs to the WD repeat RBAP46/RBAP48/MSI1 family. Probably binds directly to helix 1 of the histone fold of histone H4, a region that is not accessible when H4 is in chromatin. Self associates. Associates with chromatin. Component of the CAF-1 complex, composed of Caf1-55, Caf1-105 and Caf1-180; within the CAF-1 complex, Caf1-180 interacts directly with both Caf1-55 and Caf1-105. Component of the NuRD complex, composed of at least Caf1-55, Mi-2, MTA1-like and HDAC1/Rpd3. Within the NuRD complex, Caf1-55 may interact directly with Mi-2, MTA1-like and HDAC1/Rpd3. The NuRD complex may also associate with the methyl-DNA binding protein MBD-like via Caf1-55 and Mi-2. Component of the NURF complex, composed of Caf1-55, E(bx), Nurf-38 and Iswi. Component of the polycomb repressive complex 2 (PRC2, also known as the Esc/E(Z) complex), composed of Caf1-55, esc, E(z), Su(z)12, and possibly pho. PRC2 associates with the accessory components Jarid2 and jing to form the PRC2 Jarid2-jing variant (PRC2.2). PRC2 may also associate with Pcl and HDAC1/Rpd3 during early embryogenesis. Interacts with Rbf and Rbf2. Component of the DREAM complex at least composed of Myb, Caf1-55, mip40, mip120, mip130, E2f2, Dp, Rbf, Rbf2, lin-52, HDAC1/Rpd3 and l(3)mbt.

It localises to the nucleus. Functionally, core histone-binding subunit that may target chromatin assembly factors, chromatin remodeling factors and histone deacetylases to their histone substrates in a manner that is regulated by nucleosomal DNA. Component of several complexes which regulate chromatin metabolism. These include the chromatin assembly factor 1 (CAF-1) complex, which is required for chromatin assembly following DNA replication and DNA repair; the nucleosome remodeling and deacetylase complex (the NuRD complex), which promotes transcriptional repression by histone deacetylation and nucleosome remodeling; the nucleosome remodeling factor (NURF) complex, which catalyzes ATP-dependent nucleosome sliding and facilitates transcription of chromatin; and the polycomb group (PcG) repressor complex ESC-E(Z), which promotes repression of homeotic genes during development. Also required for transcriptional repression of E2F target genes by E2f2 and Rbf or Rbf2. The sequence is that of Chromatin assembly factor 1 p55 subunit from Drosophila melanogaster (Fruit fly).